A 586-amino-acid polypeptide reads, in one-letter code: Phosphomethylpyrimidine synthase (586 aa).

The tract at residues 1 to 58 (MKQSVSAEQIELKSSLPGSKKVYVDGPREGMKVPMREIEQSDTNGVPNPPIRVYDTSG) is disordered. Residues 22-39 (VYVDGPREGMKVPMREIE) show a composition bias toward basic and acidic residues. Residues asparagine 193, methionine 222, tyrosine 251, histidine 287, 307 to 309 (SRG), 348 to 351 (DGLR), and glutamate 387 each bind substrate. Position 391 (histidine 391) interacts with Zn(2+). Tyrosine 414 is a binding site for substrate. Zn(2+) is bound at residue histidine 455. [4Fe-4S] cluster contacts are provided by cysteine 535, cysteine 538, and cysteine 543.

Belongs to the ThiC family. Requires [4Fe-4S] cluster as cofactor.

It carries out the reaction 5-amino-1-(5-phospho-beta-D-ribosyl)imidazole + S-adenosyl-L-methionine = 4-amino-2-methyl-5-(phosphooxymethyl)pyrimidine + CO + 5'-deoxyadenosine + formate + L-methionine + 3 H(+). Its pathway is cofactor biosynthesis; thiamine diphosphate biosynthesis. Its function is as follows. Catalyzes the synthesis of the hydroxymethylpyrimidine phosphate (HMP-P) moiety of thiamine from aminoimidazole ribotide (AIR) in a radical S-adenosyl-L-methionine (SAM)-dependent reaction. This is Phosphomethylpyrimidine synthase from Bacillus anthracis (strain A0248).